A 185-amino-acid chain; its full sequence is uncharacterized protein (185 aa).

Positions 1 to 29 (MKLFSRTSLVALGTAAAITLSGVTAPAFA) are cleaved as a signal peptide. The segment at 41 to 66 (KTAEDNTPEAPGASTPLKLEQPGTIT) is disordered.

Glycosylated; by Pmt.

Its subcellular location is the secreted. This is an uncharacterized protein from Corynebacterium glutamicum (strain ATCC 13032 / DSM 20300 / JCM 1318 / BCRC 11384 / CCUG 27702 / LMG 3730 / NBRC 12168 / NCIMB 10025 / NRRL B-2784 / 534).